A 225-amino-acid polypeptide reads, in one-letter code: Small ribosomal subunit protein mS26 (225 aa).

The protein belongs to the mitochondrion-specific ribosomal protein mS26 family. Component of the mitochondrial ribosome small subunit (28S) which comprises a 12S rRNA and about 30 distinct proteins.

The protein resides in the mitochondrion. The chain is Small ribosomal subunit protein mS26 (mRpS26) from Drosophila melanogaster (Fruit fly).